Reading from the N-terminus, the 145-residue chain is Hemoglobin subunit beta-A (145 aa).

The region spanning 1-145 (MLTAEEKAAV…VANALAHRYH (145 aa)) is the Globin domain. The heme b site is built by histidine 62 and histidine 91.

This sequence belongs to the globin family. Heterotetramer of two alpha chains and two beta chains. In terms of tissue distribution, red blood cells.

Involved in oxygen transport from the lung to the various peripheral tissues. The polypeptide is Hemoglobin subunit beta-A (Bos javanicus (Wild banteng)).